The following is a 119-amino-acid chain: Protein TusC (119 aa).

This sequence belongs to the DsrF/TusC family. Heterohexamer, formed by a dimer of trimers. The hexameric TusBCD complex contains 2 copies each of TusB, TusC and TusD. The TusBCD complex interacts with TusE.

Its subcellular location is the cytoplasm. Part of a sulfur-relay system required for 2-thiolation of 5-methylaminomethyl-2-thiouridine (mnm(5)s(2)U) at tRNA wobble positions. In Shigella flexneri serotype 5b (strain 8401), this protein is Protein TusC.